We begin with the raw amino-acid sequence, 558 residues long: Serine palmitoyltransferase 2 (558 aa).

Residues 33–42 are compositionally biased toward acidic residues; that stretch reads HDDDEEEEEV. The tract at residues 33–57 is disordered; that stretch reads HDDDEEEEEVKVDQGSEETTSSHDI. Residue Lys-384 is modified to N6-(pyridoxal phosphate)lysine.

This sequence belongs to the class-II pyridoxal-phosphate-dependent aminotransferase family. As to quaternary structure, heterodimer of sptl-1/sptl-2. Pyridoxal 5'-phosphate serves as cofactor.

The enzyme catalyses L-serine + hexadecanoyl-CoA + H(+) = 3-oxosphinganine + CO2 + CoA. It functions in the pathway lipid metabolism; sphingolipid metabolism. Its function is as follows. Component of the serine palmitoyltransferase (SPT) that catalyzes the first committed step in sphingolipid biosynthesis, which is the condensation of an acyl-CoA species and L-serine. The catalytic core is composed of a heterodimer of sptl-1 and sptl-2 or sptl-1 and sptl-3. Required for the specification of abicobasal polarity and development of the gut lumen. This Caenorhabditis elegans protein is Serine palmitoyltransferase 2 (sptl-2).